The sequence spans 147 residues: Prefoldin subunit alpha (147 aa).

Belongs to the prefoldin alpha subunit family. As to quaternary structure, heterohexamer of two alpha and four beta subunits.

It is found in the cytoplasm. Its function is as follows. Molecular chaperone capable of stabilizing a range of proteins. Seems to fulfill an ATP-independent, HSP70-like function in archaeal de novo protein folding. The sequence is that of Prefoldin subunit alpha from Methanocorpusculum labreanum (strain ATCC 43576 / DSM 4855 / Z).